Consider the following 696-residue polypeptide: Gametogenetin-binding protein 2 (696 aa).

Phosphoserine is present on residues S360 and S602.

Interacts with isoform 1 of GGN. As to expression, testis-specific.

It localises to the cytoplasmic vesicle. In terms of biological role, may be involved in spermatogenesis. This is Gametogenetin-binding protein 2 (Ggnbp2) from Mus musculus (Mouse).